We begin with the raw amino-acid sequence, 281 residues long: Large ribosomal subunit protein uL2 (281 aa).

The segment at 223–281 (VRGSVMNPVDHPHGGGEGKQPVGRKSPLTPWGKIALGVKTRKTKKSSNKLILRRRKDAK) is disordered. Positions 261–281 (KTRKTKKSSNKLILRRRKDAK) are enriched in basic residues.

This sequence belongs to the universal ribosomal protein uL2 family. Part of the 50S ribosomal subunit. Forms a bridge to the 30S subunit in the 70S ribosome.

Functionally, one of the primary rRNA binding proteins. Required for association of the 30S and 50S subunits to form the 70S ribosome, for tRNA binding and peptide bond formation. It has been suggested to have peptidyltransferase activity; this is somewhat controversial. Makes several contacts with the 16S rRNA in the 70S ribosome. This is Large ribosomal subunit protein uL2 from Mycoplasmopsis synoviae (strain 53) (Mycoplasma synoviae).